Here is a 322-residue protein sequence, read N- to C-terminus: Cytochrome c biogenesis protein CcsA (322 aa).

Helical transmembrane passes span 9–29 (ILTHISFSVVSIVITIHLITL), 44–64 (GMITTFFCITGLLVTRWIFLG), 71–91 (LYESLIFLSWSFSIIHMVPYF), 97–117 (FLSAITAPSTFFTQGFATSGL), 143–163 (MILGYAALLCGSLFSVAFLVI), 225–245 (IISIGFIFLTIGILSGAVWAN), 254–274 (WDPKETWAFITWTIFAIYFHI), and 286–306 (AIVASIGFLLIWICYFGVNLL).

It belongs to the CcmF/CycK/Ccl1/NrfE/CcsA family. In terms of assembly, may interact with Ccs1.

The protein resides in the plastid. It localises to the chloroplast thylakoid membrane. Required during biogenesis of c-type cytochromes (cytochrome c6 and cytochrome f) at the step of heme attachment. The chain is Cytochrome c biogenesis protein CcsA from Manihot esculenta (Cassava).